Here is a 177-residue protein sequence, read N- to C-terminus: Adenine phosphoribosyltransferase (177 aa).

It belongs to the purine/pyrimidine phosphoribosyltransferase family. As to quaternary structure, homodimer.

The protein resides in the cytoplasm. The enzyme catalyses AMP + diphosphate = 5-phospho-alpha-D-ribose 1-diphosphate + adenine. Its pathway is purine metabolism; AMP biosynthesis via salvage pathway; AMP from adenine: step 1/1. Functionally, catalyzes a salvage reaction resulting in the formation of AMP, that is energically less costly than de novo synthesis. The protein is Adenine phosphoribosyltransferase of Acidothermus cellulolyticus (strain ATCC 43068 / DSM 8971 / 11B).